Reading from the N-terminus, the 206-residue chain is Small ribosomal subunit protein uS4 (206 aa).

In terms of domain architecture, S4 RNA-binding spans 96-156; the sequence is TRLDNVVYRM…EKSRTQARIK (61 aa).

It belongs to the universal ribosomal protein uS4 family. In terms of assembly, part of the 30S ribosomal subunit. Contacts protein S5. The interaction surface between S4 and S5 is involved in control of translational fidelity.

In terms of biological role, one of the primary rRNA binding proteins, it binds directly to 16S rRNA where it nucleates assembly of the body of the 30S subunit. Its function is as follows. With S5 and S12 plays an important role in translational accuracy. This chain is Small ribosomal subunit protein uS4, found in Shewanella amazonensis (strain ATCC BAA-1098 / SB2B).